The following is a 221-amino-acid chain: NEDD4 family-interacting protein 1 (221 aa).

Ala-2 carries the post-translational modification N-acetylalanine. Residues Ala-2–Pro-41 are interaction with UBE2L3. Residues Ala-2 to Gly-116 lie on the Cytoplasmic side of the membrane. The disordered stretch occupies residues Arg-18–Ile-45. Short sequence motifs (PPxY motif) lie at residues Pro-39 to Tyr-42, Pro-64 to Tyr-67, and Pro-74 to Tyr-76. The tract at residues Tyr-42–Tyr-76 is interaction with ITCH. The chain crosses the membrane as a helical span at residues Ile-117–Phe-137. At Cys-138–Ala-143 the chain is on the extracellular side. Residues Ala-144–Val-164 traverse the membrane as a helical segment. Topologically, residues Arg-165–Gly-172 are cytoplasmic. A helical membrane pass occupies residues Tyr-173 to Leu-193. At Arg-194 to Tyr-221 the chain is on the extracellular side.

Forms heterodimers with NDFIP2. Interacts with several E3 ubiquitin-protein ligases, including ITCH, NEDD4, NEDD4L and WWP2. The interaction with NEDD4, NEDD4L and ITCH leads to relocalization of these proteins to exosomes and eventually to exosomal secretion. Interacts with U2SURP. Interacts with SLC11A2/DMT1. Interacts with PTEN. May interact with phosphorylated EGFR. Interacts with BRAT1. Interacts with KCNH2. Interacts with MAVS. Part of a complex containing ITCH, NDFIP1 and MAP3K7. Interacts (via N-terminus) with UBE2L3; the interaction mediates recruitment of UBE2L3 to ITCH. In terms of processing, ubiquitinated by NEDD4 and ITCH; mono-, di- and polyubiquitinated forms are detected. Ubiquitination regulates its degradation. Post-translationally, undergoes transient tyrosine phosphorylation following EGF stimulation, most probably by catalyzed by SRC. Phosphorylation SRC is enhanced in the presence of NDFIP2 which may act as a scaffold to recruit SRC to NDFIP1. Widely expressed. Higher levels are detected in cerebellum, pituitary, thalamus, kidney, liver, testis, salivary glands and placenta. Also expressed in fetal brain, kidney and lung.

It localises to the endosome membrane. The protein localises to the golgi apparatus membrane. The protein resides in the synapse. Its subcellular location is the synaptosome. It is found in the cell projection. It localises to the dendrite. The protein localises to the secreted. In terms of biological role, activates HECT domain-containing E3 ubiquitin-protein ligases, including NEDD4 and ITCH, and consequently modulates the stability of their targets. As a result, controls many cellular processes. Prevents chronic T-helper cell-mediated inflammation by activating ITCH and thus controlling JUNB degradation. Promotes pancreatic beta cell death through degradation of JUNB and inhibition of the unfolded protein response, leading to reduction of insulin secretion. Restricts the production of pro-inflammatory cytokines in effector Th17 T-cells by promoting ITCH-mediated ubiquitination and degradation of RORC. Together with NDFIP2, limits the cytokine signaling and expansion of effector Th2 T-cells by promoting degradation of JAK1, probably by ITCH- and NEDD4L-mediated ubiquitination. Regulates peripheral T-cell tolerance to self and foreign antigens, forcing the exit of naive CD4+ T-cells from the cell cycle before they become effector T-cells. Negatively regulates RLR-mediated antiviral response by promoting SMURF1-mediated ubiquitination and subsequent degradation of MAVS. Negatively regulates KCNH2 potassium channel activity by decreasing its cell-surface expression and interfering with channel maturation through recruitment of NEDD4L to the Golgi apparatus where it mediates KCNH2 degradation. In cortical neurons, mediates the ubiquitination of the divalent metal transporter SLC11A2/DMT1 by NEDD4L, leading to its down-regulation and protection of the cells from cobalt and iron toxicity. Important for normal development of dendrites and dendritic spines in cortex. Enhances the ubiquitination of BRAT1 mediated by: NEDD4, NEDD4L and ITCH and is required for the nuclear localization of ubiquitinated BRAT1. Enhances the ITCH-mediated ubiquitination of MAP3K7 by recruiting E2 ubiquitin-conjugating enzyme UBE2L3 to ITCH. Modulates EGFR signaling through multiple pathways. In particular, may regulate the ratio of AKT1-to-MAPK8 signaling in response to EGF, acting on AKT1 probably through PTEN destabilization and on MAPK8 through ITCH-dependent MAP2K4 inactivation. As a result, may control cell growth rate. Inhibits cell proliferation by promoting PTEN nuclear localization and changing its signaling specificity. This is NEDD4 family-interacting protein 1 (NDFIP1) from Homo sapiens (Human).